Consider the following 162-residue polypeptide: 2-C-methyl-D-erythritol 2,4-cyclodiphosphate synthase (162 aa).

2 residues coordinate a divalent metal cation: aspartate 10 and histidine 12. 4-CDP-2-C-methyl-D-erythritol 2-phosphate-binding positions include 10 to 12 (DVH) and 36 to 37 (HS). Histidine 44 lines the a divalent metal cation pocket. 4-CDP-2-C-methyl-D-erythritol 2-phosphate-binding positions include 58–60 (DIG), 63–67 (FSDTD), and arginine 144.

It belongs to the IspF family. As to quaternary structure, homotrimer. The cofactor is a divalent metal cation.

The enzyme catalyses 4-CDP-2-C-methyl-D-erythritol 2-phosphate = 2-C-methyl-D-erythritol 2,4-cyclic diphosphate + CMP. The protein operates within isoprenoid biosynthesis; isopentenyl diphosphate biosynthesis via DXP pathway; isopentenyl diphosphate from 1-deoxy-D-xylulose 5-phosphate: step 4/6. Its function is as follows. Involved in the biosynthesis of isopentenyl diphosphate (IPP) and dimethylallyl diphosphate (DMAPP), two major building blocks of isoprenoid compounds. Catalyzes the conversion of 4-diphosphocytidyl-2-C-methyl-D-erythritol 2-phosphate (CDP-ME2P) to 2-C-methyl-D-erythritol 2,4-cyclodiphosphate (ME-CPP) with a corresponding release of cytidine 5-monophosphate (CMP). The sequence is that of 2-C-methyl-D-erythritol 2,4-cyclodiphosphate synthase from Burkholderia thailandensis (strain ATCC 700388 / DSM 13276 / CCUG 48851 / CIP 106301 / E264).